The sequence spans 489 residues: Cytochrome P450 monooxygenase ataF (489 aa).

A helical membrane pass occupies residues 12–32; that stretch reads WLEHSAVIATLFAFGTALFLV. Asn289 carries N-linked (GlcNAc...) asparagine glycosylation. Cys434 is a heme binding site.

The protein belongs to the cytochrome P450 family. Heme serves as cofactor.

It localises to the membrane. It functions in the pathway mycotoxin biosynthesis. Cytochrome P450 monooxygenase; part of the gene cluster that mediates the biosynthesis of acetylaranotin, a member of the epipolythiodioxopiperazine (ETP) class of toxins characterized by a disulfide-bridged cyclic dipeptide. The first step of acetylaranotin biosynthesis is performed by the NRPS ataP which produces diketopiperazine cyclo-L-Phe-L-Phe via the condensation of 2 phenylalanines (L-Phe). The ataC domain of ataTC then catalyzes the formation of bishydroxylation of cyclo-L-Phe-L-Phe. The glutathione S-transferase domain ataG in ataIMG further catalyzes the conjugation of two glutathiones to the bishydroxylated intermediate. Next, the dipeptidase ataJ removes the Glu residues. The following step is performed by the carbon sulfur lyase domain ataI of ataIMG which may convert the bis-cysteinyl adduct to yield an epidithiol intermediate. The ataT domain from ataTC then catalyzes the oxidation of the free dithiols, followed by a cyclization step catalyzed by the cytochrome P450 ataF. AtaF probably acts as an epoxidase to promote a dual epoxidation formation at C8 and C9 along with C8' and C9', followed by the spontaneous nucleophilic attack of the amide nitrogens N10 and N10' to yield an intermediate with the pyrrolidine partial structure. The final steps of acetylaranotin biosynthesis involve the acetylation and ring rearrangement of an epitetrathiodiketopiperazine intermediate to produce acetylaranotin. AtaH probably catalyzes the acetylation of epitetrathiodiketopiperazine to produce a diacetate and ataY is responsible for the formation of the dihydrooxepin moiety that converts the diacetate intermediate to acetylaranotin via acetylapoaranotin. Both enzymes could function independently in the absence of the other. The acetylaranotin bis-thiomethyltransferase ataS located outside of acetylaranotin gene cluster is the main thiomethyltransferase responsible for converting acetylaranotin and its related intermediates to their methylated forms. This chain is Cytochrome P450 monooxygenase ataF, found in Aspergillus terreus (strain NIH 2624 / FGSC A1156).